The sequence spans 332 residues: tRNA dimethylallyltransferase (332 aa).

14–21 (GPTASGKT) provides a ligand contact to ATP. 16 to 21 (TASGKT) is a substrate binding site. The tract at residues 39-42 (DSMQ) is interaction with substrate tRNA. A disordered region spans residues 312-332 (NKRSSNHDCKRKHPRPSTREL). The span at 320–332 (CKRKHPRPSTREL) shows a compositional bias: basic residues.

Belongs to the IPP transferase family. As to quaternary structure, monomer. Mg(2+) is required as a cofactor.

The enzyme catalyses adenosine(37) in tRNA + dimethylallyl diphosphate = N(6)-dimethylallyladenosine(37) in tRNA + diphosphate. In terms of biological role, catalyzes the transfer of a dimethylallyl group onto the adenine at position 37 in tRNAs that read codons beginning with uridine, leading to the formation of N6-(dimethylallyl)adenosine (i(6)A). The polypeptide is tRNA dimethylallyltransferase (Staphylococcus epidermidis (strain ATCC 35984 / DSM 28319 / BCRC 17069 / CCUG 31568 / BM 3577 / RP62A)).